We begin with the raw amino-acid sequence, 246 residues long: Transcriptional regulatory protein LytR (246 aa).

The Response regulatory domain maps to 2–116 (KALIIDDEPL…RIEQAVNKVR (115 aa)). Residue Asp53 is modified to 4-aspartylphosphate. Positions 141-245 (LPVEIDDKIH…MKDFKASIGL (105 aa)) constitute an HTH LytTR-type domain.

As to quaternary structure, homodimer; when phosphorylated. Phosphorylated and dephosphorylated by LytS.

It localises to the cytoplasm. Functionally, member of the two-component regulatory system LytR/LytS that regulates genes involved in autolysis, programmed cell death, biofilm formation and cell wall metabolism. Also participates in sensing and responding to host defense cationic antimicrobial peptides (HDPs). Upon phosphorylation by LytS, functions as a transcription regulator by direct binding to promoter regions of target genes including lrgA and lrgB, to positively regulate their expression. This is Transcriptional regulatory protein LytR (lytR) from Staphylococcus aureus (strain MW2).